The primary structure comprises 257 residues: Putative hydro-lyase Bamb_5282 (257 aa).

The protein belongs to the D-glutamate cyclase family.

The polypeptide is Putative hydro-lyase Bamb_5282 (Burkholderia ambifaria (strain ATCC BAA-244 / DSM 16087 / CCUG 44356 / LMG 19182 / AMMD) (Burkholderia cepacia (strain AMMD))).